The primary structure comprises 454 residues: Membrane-bound lytic murein transglycosylase F (454 aa).

The signal sequence occupies residues 1–24 (MRRPLRRVTVVLLWVALAIGVAWF). A non-LT domain region spans residues 25–265 (YDYRRSMQSL…IYNRYYTAVD (241 aa)). Residues 266-454 (TFDYVDVKKF…YDILKQKKAV (189 aa)) form an LT domain region. Glu311 is a catalytic residue.

In the N-terminal section; belongs to the bacterial solute-binding protein 3 family. This sequence in the C-terminal section; belongs to the transglycosylase Slt family.

The protein resides in the cell outer membrane. The enzyme catalyses Exolytic cleavage of the (1-&gt;4)-beta-glycosidic linkage between N-acetylmuramic acid (MurNAc) and N-acetylglucosamine (GlcNAc) residues in peptidoglycan, from either the reducing or the non-reducing ends of the peptidoglycan chains, with concomitant formation of a 1,6-anhydrobond in the MurNAc residue.. Murein-degrading enzyme that degrades murein glycan strands and insoluble, high-molecular weight murein sacculi, with the concomitant formation of a 1,6-anhydromuramoyl product. Lytic transglycosylases (LTs) play an integral role in the metabolism of the peptidoglycan (PG) sacculus. Their lytic action creates space within the PG sacculus to allow for its expansion as well as for the insertion of various structures such as secretion systems and flagella. The chain is Membrane-bound lytic murein transglycosylase F from Desulfosudis oleivorans (strain DSM 6200 / JCM 39069 / Hxd3) (Desulfococcus oleovorans).